The chain runs to 90 residues: Small ribosomal subunit protein uS15 (90 aa).

It belongs to the universal ribosomal protein uS15 family. As to quaternary structure, part of the 30S ribosomal subunit. Forms a bridge to the 50S subunit in the 70S ribosome, contacting the 23S rRNA.

Its function is as follows. One of the primary rRNA binding proteins, it binds directly to 16S rRNA where it helps nucleate assembly of the platform of the 30S subunit by binding and bridging several RNA helices of the 16S rRNA. Functionally, forms an intersubunit bridge (bridge B4) with the 23S rRNA of the 50S subunit in the ribosome. In Wolbachia sp. subsp. Drosophila simulans (strain wRi), this protein is Small ribosomal subunit protein uS15.